Here is a 377-residue protein sequence, read N- to C-terminus: Enoyl reductase cheB (377 aa).

The interval 18–361 (GGSLVIARDV…REISAEKLVV (344 aa)) is enoyl reductase (ER) domain. 49–52 (CDFK) contacts NADP(+). 137–144 (PCCIATMG) contributes to the substrate binding site. NADP(+) contacts are provided by residues 173–176 (SSSV), 200–203 (SPKN), tyrosine 218, 265–266 (LE), and threonine 283. A substrate-binding site is contributed by 285–289 (GAIII). Residue 354 to 355 (IS) coordinates NADP(+).

Belongs to the zinc-containing alcohol dehydrogenase family. It depends on heme as a cofactor.

It functions in the pathway secondary metabolite biosynthesis. Functionally, enoyl reductase; part of the gene cluster that mediates the biosynthesis of chaetoglobosin A which has a unique inhibitory activity against actin polymerization in mammalian cells. Chaetoglobosin A and its intermediates are involved in the morphological differentiation of C.globosum. The first step of the pathway is the synthesis of prochaetoglobosin I via condensation of one acetyl-CoA, 8 malonyl-CoA, and a L-tryptophan molecule by the PKS-NRPS hybrid synthetase cheA, followed by reduction of backbone double bond to install desired geometry by the enoyl reductase cheB. Further multiple oxidation steps performed by the cytochrome P450 monooxygenases cheE and cheG, as well as by the FAD-linked oxidoreductase cheF, lead to the formation of chaetoglobosin A. Depending on the order of action of these reductases, distinct intermediates can be identified. Within the pathway, the cytochrome P450 monooxygenase cheE catalyzes a stereospecific epoxidation on prochaetoglobosin I, cytoglobosin D, and chaetoglobosin J intermediates. The FAD-linked oxidoreductase cheF performs dehydrogenation of the C-20 hydroxyl groups in the 20-dihyrochaetoglobosin A and cytoglobosin D intermediates. Finally, the cytochrome P450 monooxygenase cheG can catalyze the stereospecific dihydroxylation of prochaetoglobosin I and prochaetoglobosin IV at C-19 and C-20, respectively. The Diels-Alderase cheD may play a role in the post-PKS-NRPS biosynthetic steps catalyzing Diels-Alder cyclization. The protein is Enoyl reductase cheB of Chaetomium globosum (strain ATCC 6205 / CBS 148.51 / DSM 1962 / NBRC 6347 / NRRL 1970) (Soil fungus).